The primary structure comprises 215 residues: Cardiolipin synthase (CMP-forming) (215 aa).

5 helical membrane-spanning segments follow: residues 29-49 (IPNILSMARLAGVPLFLWLIL), 60-80 (GWALLVLALSGVSDYLDGKLA), 117-137 (LWLTLVLLAREAMLLVMVGIL), 158-178 (LMYAFPLLLLSDGSGWIASLA), and 179-199 (AVFGWAFAGWGTTLYWWAGVL).

Belongs to the CDP-alcohol phosphatidyltransferase class-I family. Requires a divalent metal cation as cofactor.

The protein resides in the cell membrane. It catalyses the reaction a CDP-1,2-diacyl-sn-glycerol + a 1,2-diacyl-sn-glycero-3-phospho-(1'-sn-glycerol) = a cardiolipin + CMP + H(+). Its function is as follows. Catalyzes the synthesis of cardiolipin (CL) (diphosphatidylglycerol) by specifically transferring a phosphatidyl group from CDP-diacylglycerol to phosphatidylglycerol (PG). The chain is Cardiolipin synthase (CMP-forming) from Streptomyces coelicolor (strain ATCC BAA-471 / A3(2) / M145).